The following is a 137-amino-acid chain: Nucleoside diphosphate kinase (137 aa).

ATP-binding residues include lysine 9, phenylalanine 57, arginine 85, threonine 91, arginine 102, and asparagine 112. The active-site Pros-phosphohistidine intermediate is histidine 115.

This sequence belongs to the NDK family. As to quaternary structure, homotetramer. Requires Mg(2+) as cofactor.

It localises to the cytoplasm. The catalysed reaction is a 2'-deoxyribonucleoside 5'-diphosphate + ATP = a 2'-deoxyribonucleoside 5'-triphosphate + ADP. The enzyme catalyses a ribonucleoside 5'-diphosphate + ATP = a ribonucleoside 5'-triphosphate + ADP. In terms of biological role, major role in the synthesis of nucleoside triphosphates other than ATP. The ATP gamma phosphate is transferred to the NDP beta phosphate via a ping-pong mechanism, using a phosphorylated active-site intermediate. This Geotalea uraniireducens (strain Rf4) (Geobacter uraniireducens) protein is Nucleoside diphosphate kinase.